The sequence spans 277 residues: Large ribosomal subunit protein uL2 (277 aa).

The tract at residues 223–261 is disordered; sequence SVMNPNDHPHGGGEGKSPVGRPSPVTPWGKPALGYKTRK.

It belongs to the universal ribosomal protein uL2 family. In terms of assembly, part of the 50S ribosomal subunit. Forms a bridge to the 30S subunit in the 70S ribosome.

Functionally, one of the primary rRNA binding proteins. Required for association of the 30S and 50S subunits to form the 70S ribosome, for tRNA binding and peptide bond formation. It has been suggested to have peptidyltransferase activity; this is somewhat controversial. Makes several contacts with the 16S rRNA in the 70S ribosome. This Clostridium botulinum (strain Alaska E43 / Type E3) protein is Large ribosomal subunit protein uL2.